We begin with the raw amino-acid sequence, 377 residues long: Histone deacetylase 8 (377 aa).

A histone deacetylase region spans residues 14-324 (LPPVYIYSPE…WTYLTGVILG (311 aa)). S39 is subject to Phosphoserine. D101 provides a ligand contact to substrate. H143 acts as the Proton acceptor in catalysis. G151 is a binding site for substrate. Positions 178, 180, and 267 each coordinate a divalent metal cation. A substrate-binding site is contributed by Y306.

It belongs to the histone deacetylase family. HD type 1 subfamily. Interacts with CBFA2T3. Interacts with phosphorylated SMG5/EST1B; this interaction protects SMG5 from ubiquitin-mediated degradation. Associates with alpha-SMA (smooth muscle alpha-actin). A divalent metal cation is required as a cofactor. In terms of processing, phosphorylated by PKA on serine 39. Phosphorylation reduces deacetylase activity observed preferentially on histones H3 and H4.

The protein localises to the nucleus. It is found in the chromosome. It localises to the cytoplasm. The enzyme catalyses N(6)-acetyl-L-lysyl-[histone] + H2O = L-lysyl-[histone] + acetate. It carries out the reaction N(6)-acetyl-L-lysyl-[protein] + H2O = L-lysyl-[protein] + acetate. The catalysed reaction is N(6)-(2E)-butenoyl-L-lysyl-[protein] + H2O = (2E)-2-butenoate + L-lysyl-[protein]. Its activity is inhibited by trichostatin A (TSA) and butyrate, 2 well known histone deacetylase inhibitors. Histone deacetylase that catalyzes the deacetylation of lysine residues on the N-terminal part of the core histones (H2A, H2B, H3 and H4). Histone deacetylation gives a tag for epigenetic repression and plays an important role in transcriptional regulation, cell cycle progression and developmental events. Histone deacetylases act via the formation of large multiprotein complexes. Also involved in the deacetylation of cohesin complex protein SMC3 regulating release of cohesin complexes from chromatin. May play a role in smooth muscle cell contractility. In addition to protein deacetylase activity, also has protein-lysine deacylase activity: acts as a protein decrotonylase by mediating decrotonylation ((2E)-butenoyl) of histones. The protein is Histone deacetylase 8 (Hdac8) of Rattus norvegicus (Rat).